A 506-amino-acid polypeptide reads, in one-letter code: Allantoinase (506 aa).

Residues His-105, His-107, Lys-195, His-231, His-292, and Asp-366 each contribute to the Zn(2+) site. Lys-195 carries the N6-carboxylysine modification.

This sequence belongs to the metallo-dependent hydrolases superfamily. Allantoinase family. Homotetramer. Zn(2+) serves as cofactor. Carboxylation allows a single lysine to coordinate two zinc ions.

The catalysed reaction is (S)-allantoin + H2O = allantoate + H(+). Its pathway is nitrogen metabolism; (S)-allantoin degradation; allantoate from (S)-allantoin: step 1/1. Functionally, catalyzes the conversion of allantoin (5-ureidohydantoin) to allantoate by hydrolytic cleavage of the five-member hydantoin ring. Catalyzes the first step of the ureide allantoin degradation followed by the sequential activity of AAH, UGLYAH and UAH which allows a complete purine breakdown without the intermediate generation of urea. The polypeptide is Allantoinase (ALN) (Arabidopsis thaliana (Mouse-ear cress)).